A 119-amino-acid chain; its full sequence is Large ribosomal subunit protein P3z (119 aa).

The span at 79 to 90 shows a compositional bias: gly residues; it reads AGGAASSGGGAG. The interval 79–119 is disordered; that stretch reads AGGAASSGGGAGEAAAAPKEDEKKKEESEEEEGDFGFDLFG. A compositionally biased stretch (basic and acidic residues) spans 96 to 105; that stretch reads PKEDEKKKEE.

It belongs to the eukaryotic ribosomal protein P1/P2 family. Post-translationally, phosphorylated.

In terms of biological role, plays an important role in the elongation step of protein synthesis. The protein is Large ribosomal subunit protein P3z (RPP3A) of Arabidopsis thaliana (Mouse-ear cress).